We begin with the raw amino-acid sequence, 1662 residues long: Cortactin-binding protein 2 (1662 aa).

5 disordered regions span residues 1–23, 203–222, 361–440, 454–479, and 498–618; these read MATD…AGAA, KKKT…RSTE, SHSD…LHPG, GNAN…PTSR, and RFTS…PSID. Residues 119-276 are a coiled coil; it reads KKMQERMSAQ…EQLKRGSDSK (158 aa). Low complexity predominate over residues 386–396; that stretch reads PSTDSTPDPTS. Over residues 411–422 the composition is skewed to polar residues; the sequence is QTPGIAPQNSQA. Position 498 is an asymmetric dimethylarginine (Arg-498). Positions 583–597 are enriched in polar residues; it reads TVASPPSSLPQGNRV. ANK repeat units follow at residues 709-739, 743-772, 776-805, 809-838, 842-871, and 912-942; these read GRPT…DINY, DGHS…QINA, NGFT…NINH, GGQT…NRSV, DGWT…PACG, and EGWT…EPER. Residues 1450-1474 are disordered; that stretch reads GESGAWRKVNTSPRRKSGRFSLPTW. Ser-1524 bears the Phosphoserine mark. Disordered regions lie at residues 1580–1602 and 1618–1662; these read SQKE…KSKT and SKVT…KPNK. Over residues 1582–1599 the composition is skewed to polar residues; that stretch reads KEVSPLSSHQTTECSNSK. A compositionally biased stretch (low complexity) spans 1624 to 1638; it reads SQNTKRSSSSSNTRQ. The span at 1639-1648 shows a compositional bias: polar residues; that stretch reads IEINNNSKEN. Over residues 1649–1662 the composition is skewed to basic and acidic residues; sequence WNLHKNEHLDKPNK.

As to quaternary structure, interacts with CTTN/cortactin SH3 domain. Interacts with STRN, STRN4/zinedin and MOB4/phocein; this interactions mediate the association with the STRIPAK core complex and may regulate dendritic spine distribution of the STRIPAK complex in hippocampal neurons. Activation of glutamate receptors weakens the interaction with STRN and STRN4.

Its subcellular location is the cytoplasm. It is found in the cell cortex. The protein resides in the cell projection. The protein localises to the dendritic spine. Functionally, regulates the dendritic spine distribution of CTTN/cortactin in hippocampal neurons, and thus controls dendritic spinogenesis and dendritic spine maintenance. Associates with the striatin-interacting phosphatase and kinase (STRIPAK) core complex to regulate dendritic spine distribution of the STRIPAK complex in hippocampal neurons. The sequence is that of Cortactin-binding protein 2 (CTTNBP2) from Chlorocebus aethiops (Green monkey).